The sequence spans 146 residues: VHWTAEEKQLICSLWGKIDVGLIGGETLAGLLVIYPWTQRQFSHFGNLSSPTAIAGNPRVKAHGKKVLTSFGDAIKNLDNIKDTFAKLSELHCDKLHVDPTNFKLLGNVLVIVLADHHGKEFTPAHHAAYQKLVNVVSHSLARRYH.

The region spanning 2–146 (HWTAEEKQLI…VSHSLARRYH (145 aa)) is the Globin domain. 2 residues coordinate heme b: histidine 63 and histidine 92.

This sequence belongs to the globin family. The major hemoglobin component (HbIII) is a tetramer of two alpha-2 chains and two beta-1 chains. Red blood cells.

Functionally, involved in oxygen transport from the lung to the various peripheral tissues. The protein is Hemoglobin subunit beta-1 (HBB1) of Varanus albigularis (White-throated monitor).